Here is a 328-residue protein sequence, read N- to C-terminus: MPDRGGENGASCSVGRWSAEEARAIYNLPFNDLLFRAHGLHRENFDPNRIQLSKLLNIKTGGCPEDCGYCSQSASAENGLKASKLMEIETVLEEARKAKAAGATRYCMGAAWRSPKDRDMPALTHMIESVKAMGLETCMTLGMLDSDKAEKLADAGLDYYNHNIDTSERFYPAVITTRSFEDRLDTLANVRNAGIKVCSGGILGLGEEAEDRIDMLVTLANLPEPPESVPINMLIPMPGTRLAKAAPVDPLEFVRVVALARILMPKSHVRLTAGRTAMSDEMQALCFFAGANSLFMGDTLLTAANPGDDRDSSLLRRLGIQAETEQPA.

The Radical SAM core domain occupies 48 to 275 (NRIQLSKLLN…KSHVRLTAGR (228 aa)). The [4Fe-4S] cluster site is built by cysteine 63, cysteine 67, and cysteine 70. [2Fe-2S] cluster-binding residues include cysteine 107, cysteine 138, cysteine 198, and arginine 270.

It belongs to the radical SAM superfamily. Biotin synthase family. Homodimer. [4Fe-4S] cluster serves as cofactor. [2Fe-2S] cluster is required as a cofactor.

The catalysed reaction is (4R,5S)-dethiobiotin + (sulfur carrier)-SH + 2 reduced [2Fe-2S]-[ferredoxin] + 2 S-adenosyl-L-methionine = (sulfur carrier)-H + biotin + 2 5'-deoxyadenosine + 2 L-methionine + 2 oxidized [2Fe-2S]-[ferredoxin]. The protein operates within cofactor biosynthesis; biotin biosynthesis; biotin from 7,8-diaminononanoate: step 2/2. Catalyzes the conversion of dethiobiotin (DTB) to biotin by the insertion of a sulfur atom into dethiobiotin via a radical-based mechanism. The polypeptide is Biotin synthase (Brucella abortus (strain S19)).